The sequence spans 157 residues: Ribonuclease H (157 aa).

The RNase H type-1 domain maps to 1-142; that stretch reads MKKKIKIFID…CDFLAKISAK (142 aa). Mg(2+)-binding residues include Asp-10, Glu-48, Asp-70, and Asp-134.

This sequence belongs to the RNase H family. Monomer. Requires Mg(2+) as cofactor.

Its subcellular location is the cytoplasm. The catalysed reaction is Endonucleolytic cleavage to 5'-phosphomonoester.. In terms of biological role, endonuclease that specifically degrades the RNA of RNA-DNA hybrids. The protein is Ribonuclease H of Wigglesworthia glossinidia brevipalpis.